The primary structure comprises 403 residues: Alkaline protease 1 (403 aa).

The first 21 residues, 1–21 (MHSFKRSLLLLGALLPAVFGA), serve as a signal peptide directing secretion. Positions 22-124 (PVEPRRAAEK…QIWYIDALTS (103 aa)) are excised as a propeptide. In terms of domain architecture, Inhibitor I9 spans 35 to 119 (KYIVTFKSGL…HVEEDQIWYI (85 aa)). One can recognise a Peptidase S8 domain in the interval 129-403 (PWGLGAISHK…NLLAYNGADE (275 aa)). Active-site charge relay system residues include aspartate 161 and histidine 192. Residue asparagine 252 is glycosylated (N-linked (GlcNAc...) asparagine). The active-site Charge relay system is serine 348.

Belongs to the peptidase S8 family.

Its subcellular location is the secreted. It carries out the reaction Hydrolysis of proteins with broad specificity, and of Bz-Arg-OEt &gt; Ac-Tyr-OEt. Does not hydrolyze peptide amides.. Secreted alkaline protease that allows assimilation of proteinaceous substrates. This Emericella nidulans (strain FGSC A4 / ATCC 38163 / CBS 112.46 / NRRL 194 / M139) (Aspergillus nidulans) protein is Alkaline protease 1 (alp1).